Reading from the N-terminus, the 628-residue chain is DNA mismatch repair protein MutL (628 aa).

Positions 335–411 (SVDIEPESEQ…ASRNSEVSLP (77 aa)) are disordered. The span at 343–353 (EQTTAWQTSPT) shows a compositional bias: polar residues.

Belongs to the DNA mismatch repair MutL/HexB family.

In terms of biological role, this protein is involved in the repair of mismatches in DNA. It is required for dam-dependent methyl-directed DNA mismatch repair. May act as a 'molecular matchmaker', a protein that promotes the formation of a stable complex between two or more DNA-binding proteins in an ATP-dependent manner without itself being part of a final effector complex. The polypeptide is DNA mismatch repair protein MutL (Shewanella pealeana (strain ATCC 700345 / ANG-SQ1)).